The chain runs to 931 residues: Isoleucine--tRNA ligase (931 aa).

Positions 58–68 match the 'HIGH' region motif; that stretch reads PYANGHLHCGH. Glutamate 559 contacts L-isoleucyl-5'-AMP. Positions 600–604 match the 'KMSKS' region motif; it reads KLSKS. Lysine 603 serves as a coordination point for ATP. Zn(2+)-binding residues include cysteine 894, cysteine 897, cysteine 914, and cysteine 917.

Belongs to the class-I aminoacyl-tRNA synthetase family. IleS type 1 subfamily. Monomer. The cofactor is Zn(2+).

Its subcellular location is the cytoplasm. The catalysed reaction is tRNA(Ile) + L-isoleucine + ATP = L-isoleucyl-tRNA(Ile) + AMP + diphosphate. Catalyzes the attachment of isoleucine to tRNA(Ile). As IleRS can inadvertently accommodate and process structurally similar amino acids such as valine, to avoid such errors it has two additional distinct tRNA(Ile)-dependent editing activities. One activity is designated as 'pretransfer' editing and involves the hydrolysis of activated Val-AMP. The other activity is designated 'posttransfer' editing and involves deacylation of mischarged Val-tRNA(Ile). The protein is Isoleucine--tRNA ligase of Legionella pneumophila (strain Paris).